Consider the following 111-residue polypeptide: Capsid assembly protein Gp31 (111 aa).

In terms of assembly, homoheptamer. Forms a stable complex with groEL in the presence of ATP.

Essential for proper capsid assembly. In absence of Gp31 the major capsid protein (Gp23) assembles into 'lumps'. Acts as a co-chaperonin with the host groEL protein. The protein is Capsid assembly protein Gp31 (31) of Escherichia coli (Bacteriophage T4).